We begin with the raw amino-acid sequence, 315 residues long: Olfactory receptor 52R1 (315 aa).

The Extracellular segment spans residues 1–28 (MVLASGNSSSHPVSFILLGIPGLESFQL). Asn7 carries an N-linked (GlcNAc...) asparagine glycan. Residues 29 to 49 (WIAFPFCATYAVAVVGNITLL) traverse the membrane as a helical segment. Topologically, residues 50 to 57 (HVIRIDHT) are cytoplasmic. The helical transmembrane segment at 58–78 (LHEPMYLFLAMLAITDLVLSS) threads the bilayer. The Extracellular portion of the chain corresponds to 79–102 (STQPKMLAIFWFHAHEIQYHACLI). A disulfide bridge connects residues Cys100 and Cys192. A helical membrane pass occupies residues 103–123 (QVFFIHAFSSVESGVLMAMAL). Over 124–142 (DCYVAICFPLRHSSILTPS) the chain is Cytoplasmic. A helical transmembrane segment spans residues 143 to 163 (VVIKLGTIVMLRGLLWVSPFC). The Extracellular segment spans residues 164 to 199 (FMVSRMPFCQHQAIPQSYCEHMAVLKLVCADTSISR). Residues 200–220 (GNGLFVAFSVAGFDMIVIGMS) traverse the membrane as a helical segment. Topologically, residues 221–240 (YVMILRAVLQLPSGEARLKA) are cytoplasmic. A helical membrane pass occupies residues 241 to 261 (FSTRSSHICVILALYIPALFS). Residues 262–276 (FLTYRFGHDVPRVVH) are Extracellular-facing. The chain crosses the membrane as a helical span at residues 277–297 (ILFANLYLLIPPMLNPIIYGV). Topologically, residues 298–315 (RTKQIGDRVIQGCCGNIP) are cytoplasmic.

This sequence belongs to the G-protein coupled receptor 1 family.

The protein resides in the cell membrane. Functionally, odorant receptor. The chain is Olfactory receptor 52R1 (OR52R1) from Homo sapiens (Human).